The primary structure comprises 335 residues: UPF0353 protein MLBr01808 (335 aa).

2 helical membrane-spanning segments follow: residues 18 to 38 and 67 to 87; these read WFFL…MMQV and VPAI…AGPT. Residues 98 to 294 form the VWFA domain; it reads VVMLVIDVSQ…AELKAVYASL (197 aa). The chain crosses the membrane as a helical span at residues 309 to 329; the sequence is AGWLRLGVLVLALAALTALLI.

This sequence belongs to the UPF0353 family.

The protein resides in the cell membrane. This Mycobacterium leprae (strain Br4923) protein is UPF0353 protein MLBr01808.